We begin with the raw amino-acid sequence, 541 residues long: Forkhead box protein O (541 aa).

The span at 118 to 150 (NEQCGQLGGASSNGSTAMLHTPDGSNSHQTSFP) shows a compositional bias: polar residues. Disordered stretches follow at residues 118-168 (NEQC…GKKT) and 252-291 (WVIN…GAKK). Positions 175–268 (WGNMSYAELI…KPGRNPRRTR (94 aa)) form a DNA-binding region, fork-head. Thr273 carries the post-translational modification Phosphothreonine. Ser319 bears the Phosphoserine; by CaMK2 mark.

In terms of assembly, interacts with rle-1. Interacts with unc-43 and tax-6. Interacts with jnk-1. Interacts with ftt-2. Interacts with prmt-1. Interacts with hcf-1. Post-translationally, phosphorylated by akt-1 and/or akt-2. Phosphorylated by sgk-1. Phosphorylated by unc-43. Phosphorylated by jnk-1. Dephosphorylated by tax-6 in vitro. In terms of processing, ubiquitinated. Ubiquitination by rle-1 leads to proteasome-mediated degradation. Methylation by prmt-1 prevents phosphorylation and promotes translocation to the nucleus to allow for daf-16-dependent transcription. In terms of tissue distribution, isoform b and isoform c are expressed in ectoderm, muscles, intestine and neurons. Isoform b is also expressed in the pharynx. The intestine appears to be the primary site of longevity function.

The protein resides in the nucleus. Its subcellular location is the cytoplasm. In terms of biological role, forkhead-type transcription factor. Binds to the promoters of genes that contain the daf-16/FOXO binding element (DBE), TTGTTTAC, in their regulatory region. Functions in the Insulin/IGF-1-like signaling (IIS) mediated pathway which affects lipogenesis, lifespan, starvation survival, heat shock and oxidative stress responses, sleep, associative memory, and dauer formation. Longevity signaling predominantly arises from expression in the intestine. Acts in the intestine to mediate the role of slo-1 in age-associated decline in motor activity and longevity. Transcriptional activity of daf-16/FOXO is negatively regulated by interaction with host cell factor homolog hcf-1; and by cytoplasmic sequestration by association with ftt-2. Inhibition is required for the carbon dioxide (CO2) avoidance response. Upon loss of inhibition, daf-16 translocates to the nucleus to regulate genes that result in delayed reproduction and growth while increasing stress resistance starvation tolerance and longevity. Association with arginine methyltransferase prmt-1 prevents phosphorylation and allows for translocation to the nucleus and the subsequent transcription of longevity-related genes. Modulation of its activity by cGMP levels in sensory neurons regulates lifespan. Has a protective role against muscle dystrophy. Involved in mediating protection against aberrant protein aggregation proteotoxicity. Influences transcription of genes that code for proteins involved in immunity as part of a general stress response. Targets genes that inhibit and stimulate tumor growth. Targets kinases, phosphatases and transcription factors that are primarily involved in signaling and gene regulation. Thought to regulate ins-7 in FOXO-to-FOXO signaling, which coordinates daf-16 expression. Activity is positively regulated by shc-1-mediated inhibition of daf-2 and activation of JNK pathway. Through the regulation of its activity by shc-1-mediated inhibition of daf-2 and activation of JNK pathway, plays a role in maintaining the integrity of the gonad. Functions by indirect interaction with jnk-1 of the mitogen-activated protein kinase (MAPK) pathway. Involved in increased proteasome activity by activating expression of rpn-6.1 in response to proteotoxic stress, leading to enhanced assembly of the 26S proteasome, followed by higher proteasome activity. Also regulates proteasome activity in the intestine by preventing expression of deubiquitinase ubh-4. Represses transcription of natc-1. Involved in regulation of srh-234 expression. Binds to the promoter of the AMPK-gamma regulatory subunit, aakg-4, and activates its transcription. Also activates transcription of AMPK-gamma regulatory subunit, aakg-1. Maintains endoplasmic reticulum (ER) function by inducing protein degradation and elimination to remove misfolded secretory proteins from the ER independently of the ire-1/xbp-1 unfolded protein response pathway. Regulates epidermal innate immunity to nematophagous fungal infection and physical wounding which trigger bli-3 induced ROS release, leading to daf-16 activation independently of daf-2 signaling. May negatively regulate resistance to stress caused by oxidized cholesterol adducts by preventing the activation of daf-9 and nuclear hormone receptor daf-12, two members of the steroid signaling pathway. Promotes apoptosis during embryonic development. Probably through the regulation of the autophagy genes atg-18 and atg-16.2, plays a role in regulating stem cell number in the germline during larval development. Plays a role in learning and memory; including associative memory, and aversive gustatory associated learning known as salt avoidance learning. Plays a role in regulating gene transcription in response to white light exposure. Binds to the promoter of dex-1 to positively regulate its expression in seam cells during the dauer phase. Plays a role in transgenerational lipid accumulation in response to a high-fat diet. Functions in the Insulin/IGF-1-like signaling (IIS) mediated pathway. May play a role in lifespan modulation, but less significant than that played by isoforms d and f. Functionally, functions in the Insulin/IGF-1-like signaling (IIS) mediated pathway. Transcript level in the early adult may play a role in lifespan modulation, but effect is more significant than that played by isoform a. This is Forkhead box protein O from Caenorhabditis elegans.